The following is a 244-amino-acid chain: tRNA (guanine-N(7)-)-methyltransferase (244 aa).

S-adenosyl-L-methionine is bound by residues glutamate 75, glutamate 100, aspartate 127, and aspartate 150. Aspartate 150 is an active-site residue. Substrate contacts are provided by residues lysine 154, aspartate 186, and 223–226; that span reads TRFE.

The protein belongs to the class I-like SAM-binding methyltransferase superfamily. TrmB family.

The enzyme catalyses guanosine(46) in tRNA + S-adenosyl-L-methionine = N(7)-methylguanosine(46) in tRNA + S-adenosyl-L-homocysteine. It participates in tRNA modification; N(7)-methylguanine-tRNA biosynthesis. Catalyzes the formation of N(7)-methylguanine at position 46 (m7G46) in tRNA. The polypeptide is tRNA (guanine-N(7)-)-methyltransferase (Xylella fastidiosa (strain M12)).